The sequence spans 247 residues: MTHYKVTLAYDGTNFAGYQVQPKQRTVQGVLQKALTKMTKGQPVHVDGSGRTDSGVHALGQVISFDYPGNIPAESMLKAMNSLMPLDIEILKAEIVDADFHARYSAKGKRYLYRVARGYYTNPFNRLYTGHYPYKLDVQRIEVALKDLVGTHDFTSFAASGGVIVDKVRTIYEATVREDPVTNEIIFEFYGNGFLYNMVRILVATALEIGNGRRDVHDFQRLFAVKDRQQARGTAPASGLYLKEVYY.

Catalysis depends on aspartate 53, which acts as the Nucleophile. Residue tyrosine 111 participates in substrate binding.

It belongs to the tRNA pseudouridine synthase TruA family. As to quaternary structure, homodimer.

The catalysed reaction is uridine(38/39/40) in tRNA = pseudouridine(38/39/40) in tRNA. Formation of pseudouridine at positions 38, 39 and 40 in the anticodon stem and loop of transfer RNAs. The protein is tRNA pseudouridine synthase A of Lacticaseibacillus casei (strain BL23) (Lactobacillus casei).